The primary structure comprises 266 residues: Small ribosomal subunit protein uS3m (266 aa).

The protein belongs to the universal ribosomal protein uS3 family.

Its subcellular location is the mitochondrion. The polypeptide is Small ribosomal subunit protein uS3m (MRPS3) (Mycosarcoma maydis (Corn smut fungus)).